The sequence spans 208 residues: Glutathione S-transferase GstB (208 aa).

Residues 1–83 enclose the GST N-terminal domain; the sequence is MITLWGRNNS…YLAAQYGQKR (83 aa). Residues asparagine 12, asparagine 39, valine 53, and 67-68 each bind glutathione; that span reads ES. The GST C-terminal domain occupies 88-208; the sequence is SPARRAEAEK…VRKVVMIPVS (121 aa).

The protein belongs to the GST superfamily.

The catalysed reaction is RX + glutathione = an S-substituted glutathione + a halide anion + H(+). Its function is as follows. Conjugation of reduced glutathione to a wide number of exogenous and endogenous hydrophobic electrophiles. This chain is Glutathione S-transferase GstB (gstB), found in Escherichia coli O6:H1 (strain CFT073 / ATCC 700928 / UPEC).